A 582-amino-acid chain; its full sequence is MIKTQESLTLEDVAVEFSWEEWQLLDTAQKNLYRDVMVENYNHLVSLGYQTSKPDVLSKLAHGQEPWITVAKIQNKNCPGIGKADSLLQEHSLNQRLLKSVQQCNGQNTLRNTVHLSKTHFPIVQNHDTFDLYRKNLKSSLSLINQKRRHGINNPVEFIGGEKTLKHECMHAKTRFSENAKCIHTKFQVFKHQRTQKIEKPHACIECEQTFLRKSQLIYHENIHIPENPGSGQCEKLSRSVLFTKHLKTNTRDKICIPNEYRKGSTVNSRLIAHQQTHTEEKSYMCSECGKGFTMKRYLIAHQRTHSGEKPYVCNECGKGFTVKSNLIVHQRTHTGEKPYICSECGKGFTMKRYLVVHQRTHTGEKPYICSECGKGFTVKSNLIVHQRSHTGEKSYICSECGKGFTVKRTLIIHQRTHTGEKSYICNECGKGFTTKRTLIIHQRTHTGEKPYECNECGKAFSQKICLIQHERCHTGKTPFVCTECGKSYSHKYGLITHQRIHTGEKPYECNECGKAFTTKSVLNVHQRTHTGERPYGCSDCEKAFSHLSNLVKHKKMHTREMGRISQVENSCNEESQLLPYK.

The region spanning 8–79 is the KRAB domain; it reads LTLEDVAVEF…VAKIQNKNCP (72 aa). Residues 202 to 224 form a C2H2-type 1 zinc finger; it reads HACIECEQTFLRKSQLIYHENIH. A C2H2-type 2; degenerate zinc finger spans residues 254-278; that stretch reads KICIPNEYRKGSTVNSRLIAHQQTH. 10 consecutive C2H2-type zinc fingers follow at residues 284-306, 312-334, 340-362, 368-390, 396-418, 424-446, 452-474, 480-502, 508-530, and 536-558; these read YMCS…QRTH, YVCN…QRTH, YICS…QRTH, YICS…QRSH, YICN…QRTH, YECN…ERCH, FVCT…QRIH, YECN…QRTH, and YGCS…KKMH.

Belongs to the krueppel C2H2-type zinc-finger protein family.

Its subcellular location is the nucleus. Its function is as follows. May be involved in transcriptional regulation. The protein is Zinc finger protein 614 (ZNF614) of Macaca fascicularis (Crab-eating macaque).